The following is a 100-amino-acid chain: Mitochondrial import inner membrane translocase subunit Tim10 B (100 aa).

Residues 25 to 49 (CFQRCVPSLHHRALDAEEEACLHSC) carry the Twin CX3C motif motif. Cystine bridges form between Cys-25–Cys-49 and Cys-29–Cys-45.

Belongs to the small Tim family. In terms of assembly, component of the TIM22 complex, which core is composed of TIMM22, associated with TIMM10 (TIMM10A and/or TIMM10B), TIMM9, AGK and TIMM29.

It is found in the mitochondrion inner membrane. Component of the TIM22 complex, a complex that mediates the import and insertion of multi-pass transmembrane proteins into the mitochondrial inner membrane. The TIM22 complex forms a twin-pore translocase that uses the membrane potential as the external driving force. In the TIM22 complex, it may act as a docking point for the soluble 70 kDa complex that guides the target proteins in transit through the aqueous mitochondrial intermembrane space. This chain is Mitochondrial import inner membrane translocase subunit Tim10 B (Timm10b), found in Rattus norvegicus (Rat).